The sequence spans 65 residues: Ovary maturating parsin (65 aa).

Low complexity predominate over residues proline 17–alanine 28. Residues proline 17–arginine 36 are disordered.

Monomer.

Functionally, neurohormone that anticipates ovarian maturation. Acts as a true gonadotropin and stimulates vitellogenin biosynthesis. The protein is Ovary maturating parsin of Locusta migratoria (Migratory locust).